Reading from the N-terminus, the 362-residue chain is Heme A synthase (362 aa).

The next 5 helical transmembrane spans lie at 12–32 (AVRI…LVGG), 102–122 (VIGA…DLGG), 128–148 (LWII…MVAS), 159–179 (VRLA…VWTL), and 198–218 (AAVL…VAGL). His262 is a heme binding site. 3 consecutive transmembrane segments (helical) span residues 264–281 (MLAY…IDAW), 289–309 (GALA…VTLL), and 312–332 (VPIG…TLAV). Residue His320 participates in heme binding.

Belongs to the COX15/CtaA family. Type 2 subfamily. Interacts with CtaB. Heme b serves as cofactor.

The protein resides in the cell membrane. The enzyme catalyses Fe(II)-heme o + 2 A + H2O = Fe(II)-heme a + 2 AH2. The protein operates within porphyrin-containing compound metabolism; heme A biosynthesis; heme A from heme O: step 1/1. Functionally, catalyzes the conversion of heme O to heme A by two successive hydroxylations of the methyl group at C8. The first hydroxylation forms heme I, the second hydroxylation results in an unstable dihydroxymethyl group, which spontaneously dehydrates, resulting in the formyl group of heme A. This is Heme A synthase from Rhodopseudomonas palustris (strain BisB18).